The following is a 255-amino-acid chain: Epoxyqueuosine reductase QueH (255 aa).

[4Fe-4S] cluster contacts are provided by Cys-44, Cys-45, Cys-128, and Cys-131. An intrachain disulfide couples Cys-210 to Cys-212.

The protein belongs to the QueH family.

It carries out the reaction epoxyqueuosine(34) in tRNA + AH2 = queuosine(34) in tRNA + A + H2O. The protein operates within tRNA modification; tRNA-queuosine biosynthesis. In terms of biological role, catalyzes the conversion of epoxyqueuosine (oQ) to queuosine (Q), which is a hypermodified base found in the wobble positions of tRNA(Asp), tRNA(Asn), tRNA(His) and tRNA(Tyr). In Streptococcus pyogenes serotype M1, this protein is Epoxyqueuosine reductase QueH.